The primary structure comprises 421 residues: Zinc metalloproteinase-disintegrin-like lachestatin-2 (421 aa).

A Peptidase M12B domain is found at 10 to 206 (KYVKLVLVAD…DMPQCILEKP (197 aa)). 3 disulfide bridges follow: Cys121-Cys201, Cys161-Cys185, and Cys163-Cys168. His146 lines the Zn(2+) pocket. The active site involves Glu147. Residues His150 and His156 each contribute to the Zn(2+) site. Positions 214–299 (PPVCGNYFVE…AECTDRFQRN (86 aa)) constitute a Disintegrin domain. Ca(2+)-binding residues include Val216, Asn219, Phe221, Glu223, Glu226, and Asp229. 14 disulfide bridges follow: Cys217–Cys246, Cys228–Cys241, Cys230–Cys236, Cys240–Cys263, Cys254–Cys260, Cys259–Cys285, Cys272–Cys292, Cys279–Cys310, Cys303–Cys315, Cys322–Cys372, Cys337–Cys383, Cys350–Cys360, Cys367–Cys409, and Cys403–Cys414. The short motif at 278–280 (ECD) is the D/ECD-tripeptide element. 5 residues coordinate Ca(2+): Asp280, Met281, Asp283, Asp294, and Arg295. N-linked (GlcNAc...) asparagine glycosylation occurs at Asn312.

The protein belongs to the venom metalloproteinase (M12B) family. P-III subfamily. P-IIIc sub-subfamily. As to quaternary structure, homodimer; disulfide-linked. Requires Zn(2+) as cofactor. As to expression, expressed by the venom gland.

It localises to the secreted. In terms of biological role, snake venom zinc metalloprotease that induces apoptosis in vascular endothelial cells (VEC), without degrading the extracellular matrix (it cannot cleave collagen) or inhibiting adhesion of VEC. Has also fibrinogenolytic and hemorrhagic activities. This Lachesis muta rhombeata (Bushmaster) protein is Zinc metalloproteinase-disintegrin-like lachestatin-2.